The following is a 110-amino-acid chain: Mitochondrial pyruvate carrier 1 (110 aa).

The next 2 helical transmembrane spans lie at 20-36 (HFWGPIANWGFVAAGLV) and 44-61 (MISGNMSSAMCVYSALFM).

Belongs to the mitochondrial pyruvate carrier (MPC) (TC 2.A.105) family.

It localises to the mitochondrion inner membrane. Its function is as follows. Mediates the uptake of pyruvate into mitochondria. This is Mitochondrial pyruvate carrier 1 from Arabidopsis thaliana (Mouse-ear cress).